Reading from the N-terminus, the 165-residue chain is Disulfide bond formation protein B (165 aa).

Topologically, residues 1–16 (MTILNSLNQFSKGRLS) are cytoplasmic. A helical transmembrane segment spans residues 17–33 (WLLLLLFVVFFEACALY). Residues 34–51 (FQHVMMLAPCVMCIYERV) lie on the Periplasmic side of the membrane. A disulfide bridge links C43 with C46. The helical transmembrane segment at 52 to 67 (AMMGVGVAAIVGLMAP) threads the bilayer. Residues 68–74 (NNPIFRW) are Cytoplasmic-facing. Residues 75–92 (LGLIGWGLSSYKGLLLAQ) traverse the membrane as a helical segment. Residues 93-147 (QHVDYQFNPSPFATCDLFVTFPSWRPLNQWAPWIFEAYGDCSKIVWQFLDLSMPQ) lie on the Periplasmic side of the membrane. C107 and C133 are disulfide-bonded. Residues 148-165 (WLVVIFAGNLIALALIVI) form a helical membrane-spanning segment.

It belongs to the DsbB family.

The protein resides in the cell inner membrane. Functionally, required for disulfide bond formation in some periplasmic proteins. Acts by oxidizing the DsbA protein. This is Disulfide bond formation protein B from Vibrio alginolyticus.